The primary structure comprises 616 residues: Chaperone protein HscA (616 aa).

It belongs to the heat shock protein 70 family.

Its function is as follows. Chaperone involved in the maturation of iron-sulfur cluster-containing proteins. Has a low intrinsic ATPase activity which is markedly stimulated by HscB. Involved in the maturation of IscU. This Salmonella newport (strain SL254) protein is Chaperone protein HscA.